The primary structure comprises 467 residues: 5'-nucleotidase domain-containing protein 1 (467 aa).

Asp16 serves as the catalytic Nucleophile. 2 residues coordinate Mg(2+): Asp16 and Asp18. The Proton donor role is filled by Asp18. Lys181 is modified (N6-acetyllysine). Residue Asp323 coordinates Mg(2+).

This sequence belongs to the 5'(3')-deoxyribonucleotidase family.

In Mus musculus (Mouse), this protein is 5'-nucleotidase domain-containing protein 1 (Nt5dc1).